The chain runs to 26 residues: Toxin TdII-1 (26 aa).

The protein belongs to the long (4 C-C) scorpion toxin superfamily. Sodium channel inhibitor family. Beta subfamily. As to expression, expressed by the venom gland.

The protein localises to the secreted. Its function is as follows. Beta toxins bind voltage-independently at site-4 of sodium channels (Nav) and shift the voltage of activation toward more negative potentials thereby affecting sodium channel activation and promoting spontaneous and repetitive firing. This toxin is active against mammals and crustaceans. This is Toxin TdII-1 from Tityus discrepans (Venezuelan scorpion).